We begin with the raw amino-acid sequence, 429 residues long: Dual-specificity RNA methyltransferase RlmN (429 aa).

The tract at residues 1-23 (MRAMQTHTEIAPMPIPGHVDPVP) is disordered. Glu128 functions as the Proton acceptor in the catalytic mechanism. Residues 134 to 397 (DADRGTLCVS…APVRTPRGRD (264 aa)) form the Radical SAM core domain. An intrachain disulfide couples Cys141 to Cys402. The [4Fe-4S] cluster site is built by Cys148, Cys152, and Cys155. S-adenosyl-L-methionine-binding positions include 226 to 227 (GE), Ser258, 280 to 282 (SLH), and Asn359. Cys402 acts as the S-methylcysteine intermediate in catalysis.

It belongs to the radical SAM superfamily. RlmN family. [4Fe-4S] cluster is required as a cofactor.

The protein resides in the cytoplasm. It carries out the reaction adenosine(2503) in 23S rRNA + 2 reduced [2Fe-2S]-[ferredoxin] + 2 S-adenosyl-L-methionine = 2-methyladenosine(2503) in 23S rRNA + 5'-deoxyadenosine + L-methionine + 2 oxidized [2Fe-2S]-[ferredoxin] + S-adenosyl-L-homocysteine. The enzyme catalyses adenosine(37) in tRNA + 2 reduced [2Fe-2S]-[ferredoxin] + 2 S-adenosyl-L-methionine = 2-methyladenosine(37) in tRNA + 5'-deoxyadenosine + L-methionine + 2 oxidized [2Fe-2S]-[ferredoxin] + S-adenosyl-L-homocysteine. Its function is as follows. Specifically methylates position 2 of adenine 2503 in 23S rRNA and position 2 of adenine 37 in tRNAs. m2A2503 modification seems to play a crucial role in the proofreading step occurring at the peptidyl transferase center and thus would serve to optimize ribosomal fidelity. The sequence is that of Dual-specificity RNA methyltransferase RlmN from Novosphingobium aromaticivorans (strain ATCC 700278 / DSM 12444 / CCUG 56034 / CIP 105152 / NBRC 16084 / F199).